The following is a 319-amino-acid chain: Pyrroline-5-carboxylate reductase 1, mitochondrial (319 aa).

Ser-2 is modified (N-acetylserine). NADP(+) contacts are provided by residues 6 to 11 (IGAGQL) and Ser-34. NADPH contacts are provided by Ala-8, Gln-10, Leu-11, Ser-34, Asp-36, Asn-56, Val-70, Lys-71, and Ala-97. Residues Asn-56, 69–72 (AVKP), and 95–97 (CAA) contribute to the NADP(+) site. Position 164 (Glu-164) interacts with L-proline. Residue Asn-230 participates in NADPH binding. Positions 237 and 238 each coordinate L-proline. A phosphoserine mark is found at Ser-278 and Ser-301. The interval 294–319 (SPAGTALSPSGHTKLLPRSLAPAGKD) is disordered.

The protein belongs to the pyrroline-5-carboxylate reductase family. Homodecamer; composed of 5 homodimers. Interacts with LTO1.

The protein localises to the mitochondrion. It catalyses the reaction L-proline + NADP(+) = (S)-1-pyrroline-5-carboxylate + NADPH + 2 H(+). It carries out the reaction L-proline + NAD(+) = (S)-1-pyrroline-5-carboxylate + NADH + 2 H(+). Its pathway is amino-acid biosynthesis; L-proline biosynthesis; L-proline from L-glutamate 5-semialdehyde: step 1/1. Its activity is regulated as follows. Subject to competitive inhibition by the reaction product proline. Subject to competitive inhibition by stearoyl coenzyme A. Functionally, oxidoreductase that catalyzes the last step in proline biosynthesis, which corresponds to the reduction of pyrroline-5-carboxylate to L-proline using NAD(P)H. At physiologic concentrations, has higher specific activity in the presence of NADH. Involved in the cellular response to oxidative stress. The sequence is that of Pyrroline-5-carboxylate reductase 1, mitochondrial from Homo sapiens (Human).